A 282-amino-acid chain; its full sequence is tRNA pseudouridine synthase B (282 aa).

Asp-36 functions as the Nucleophile in the catalytic mechanism.

The protein belongs to the pseudouridine synthase TruB family. Type 1 subfamily.

The enzyme catalyses uridine(55) in tRNA = pseudouridine(55) in tRNA. Responsible for synthesis of pseudouridine from uracil-55 in the psi GC loop of transfer RNAs. The protein is tRNA pseudouridine synthase B of Mycoplasmopsis pulmonis (strain UAB CTIP) (Mycoplasma pulmonis).